A 239-amino-acid polypeptide reads, in one-letter code: tRNA (guanine-N(7)-)-methyltransferase (239 aa).

Positions 69, 94, 121, and 144 each coordinate S-adenosyl-L-methionine. Asp-144 is a catalytic residue. Lys-148 lines the substrate pocket. The interaction with RNA stretch occupies residues 150-155; it reads RHNKRR. Substrate is bound by residues Asp-180 and 217 to 220; that span reads TKFE.

This sequence belongs to the class I-like SAM-binding methyltransferase superfamily. TrmB family. In terms of assembly, monomer.

The enzyme catalyses guanosine(46) in tRNA + S-adenosyl-L-methionine = N(7)-methylguanosine(46) in tRNA + S-adenosyl-L-homocysteine. The protein operates within tRNA modification; N(7)-methylguanine-tRNA biosynthesis. Catalyzes the formation of N(7)-methylguanine at position 46 (m7G46) in tRNA. This is tRNA (guanine-N(7)-)-methyltransferase from Shigella flexneri serotype 5b (strain 8401).